A 309-amino-acid polypeptide reads, in one-letter code: NAD-dependent protein deacylase sirtuin-5A, mitochondrial (309 aa).

The N-terminal 35 residues, Met1–Pro35, are a transit peptide targeting the mitochondrion. In terms of domain architecture, Deacetylase sirtuin-type spans Ser36 to Glu306. Gly57–Trp76 contacts NAD(+). Positions 101 and 104 each coordinate substrate. Gln139–Asp142 serves as a coordination point for NAD(+). His157 (proton acceptor) is an active-site residue. Zn(2+)-binding residues include Cys165, Cys168, Cys206, and Cys211. NAD(+)-binding positions include Gly248 to Ser250, Asn274 to Glu276, and Cys292.

Belongs to the sirtuin family. Class III subfamily. Zn(2+) serves as cofactor.

Its subcellular location is the mitochondrion. It is found in the cytoplasm. The protein resides in the cytosol. The protein localises to the nucleus. The enzyme catalyses N(6)-malonyl-L-lysyl-[protein] + NAD(+) + H2O = 2''-O-malonyl-ADP-D-ribose + nicotinamide + L-lysyl-[protein]. It catalyses the reaction N(6)-succinyl-L-lysyl-[protein] + NAD(+) + H2O = 2''-O-succinyl-ADP-D-ribose + nicotinamide + L-lysyl-[protein]. The catalysed reaction is N(6)-glutaryl-L-lysyl-[protein] + NAD(+) + H2O = 2''-O-glutaryl-ADP-D-ribose + nicotinamide + L-lysyl-[protein]. In terms of biological role, NAD-dependent lysine demalonylase, desuccinylase and deglutarylase that specifically removes malonyl, succinyl and glutaryl groups on target proteins. Has weak NAD-dependent protein deacetylase activity; however this activity may not be physiologically relevant in vivo. This is NAD-dependent protein deacylase sirtuin-5A, mitochondrial (sirt5-a) from Xenopus laevis (African clawed frog).